A 167-amino-acid chain; its full sequence is Phosphopantetheine adenylyltransferase (167 aa).

A substrate-binding site is contributed by T13. ATP-binding positions include 13–14 and H21; that span reads TF. Residues K45, L78, and R92 each contribute to the substrate site. ATP contacts are provided by residues 93-95, E103, and 128-134; these read GLR and TQFISSS.

It belongs to the bacterial CoaD family. Homohexamer. Mg(2+) is required as a cofactor.

It localises to the cytoplasm. It carries out the reaction (R)-4'-phosphopantetheine + ATP + H(+) = 3'-dephospho-CoA + diphosphate. It functions in the pathway cofactor biosynthesis; coenzyme A biosynthesis; CoA from (R)-pantothenate: step 4/5. Functionally, reversibly transfers an adenylyl group from ATP to 4'-phosphopantetheine, yielding dephospho-CoA (dPCoA) and pyrophosphate. The protein is Phosphopantetheine adenylyltransferase of Wolbachia sp. subsp. Brugia malayi (strain TRS).